Here is a 236-residue protein sequence, read N- to C-terminus: ATP synthase subunit a (236 aa).

5 consecutive transmembrane segments (helical) span residues 17–37 (LANV…AVLA), 80–100 (MTLI…SVVI), 114–134 (VVTL…GIKL), 179–199 (ILLA…IAAI), and 208–228 (FSIF…MVYM).

It belongs to the ATPase A chain family. As to quaternary structure, F-type ATPases have 2 components, CF(1) - the catalytic core - and CF(0) - the membrane proton channel. CF(1) has five subunits: alpha(3), beta(3), gamma(1), delta(1), epsilon(1). CF(0) has three main subunits: a(1), b(2) and c(9-12). The alpha and beta chains form an alternating ring which encloses part of the gamma chain. CF(1) is attached to CF(0) by a central stalk formed by the gamma and epsilon chains, while a peripheral stalk is formed by the delta and b chains.

Its subcellular location is the cell membrane. Functionally, key component of the proton channel; it plays a direct role in the translocation of protons across the membrane. This chain is ATP synthase subunit a, found in Anoxybacillus flavithermus (strain DSM 21510 / WK1).